The following is a 398-amino-acid chain: uncharacterized protein (398 aa).

A Radical SAM core domain is found at 21-253 (TNFGPTNLII…WQLTSTSEPE (233 aa)). [4Fe-4S] cluster-binding residues include Cys37, Cys41, and Cys44.

The protein belongs to the radical SAM superfamily. Anaerobic sulfatase-maturating enzyme family. It depends on [4Fe-4S] cluster as a cofactor.

This is an uncharacterized protein from Synechocystis sp. (strain ATCC 27184 / PCC 6803 / Kazusa).